We begin with the raw amino-acid sequence, 704 residues long: Elongation factor G (704 aa).

In terms of domain architecture, tr-type G spans 10–286 (KKVRNIGIMA…AVIDFLPNPM (277 aa)). Residues 19 to 26 (AHIDAGKT), 83 to 87 (DTPGH), and 137 to 140 (NKMD) each bind GTP.

It belongs to the TRAFAC class translation factor GTPase superfamily. Classic translation factor GTPase family. EF-G/EF-2 subfamily.

Its subcellular location is the cytoplasm. Its function is as follows. Catalyzes the GTP-dependent ribosomal translocation step during translation elongation. During this step, the ribosome changes from the pre-translocational (PRE) to the post-translocational (POST) state as the newly formed A-site-bound peptidyl-tRNA and P-site-bound deacylated tRNA move to the P and E sites, respectively. Catalyzes the coordinated movement of the two tRNA molecules, the mRNA and conformational changes in the ribosome. This Corynebacterium jeikeium (strain K411) protein is Elongation factor G.